We begin with the raw amino-acid sequence, 350 residues long: MNLRGLFQDFNPSKFLIYACLLLFSVLLALRLDGIIQWSYWAVFAPIWLWKLMVIVGASVGTGVWARNPQYRAEGETCVEFKAMLIAVGIHLLLLMFEVLVCDRIERGSHFWLLVFMPLFFVSPVSVAACVWGFRHDRSLELEILCSVNILQFIFIALRLDKIIHWPWLVVCVPLWILMSFLCLVVLYYIVWSVLFLRSMDVIAEQRRTHITMALSWMTIVVPLLTFEILLVHKLDGHNAFSCIPIFVPLWLSLITLMATTFGQKGGNHWWFGIRKDFCQFLLEIFPFLREYGNISYDLHHEDNEETEETPVPEPPKIAPMFRKKARVVITQSPGKYVLPPPKLNIEMPD.

Helical transmembrane passes span 16–36 (LIYACLLLFSVLLALRLDGII), 41–61 (WAVFAPIWLWKLMVIVGASVG), 81–101 (FKAMLIAVGIHLLLLMFEVLV), 111–131 (FWLLVFMPLFFVSPVSVAACV), 177–197 (ILMSFLCLVVLYYIVWSVLFL), 211–231 (ITMALSWMTIVVPLLTFEILL), and 240–260 (AFSCIPIFVPLWLSLITLMAT). Residues 298–350 (DLHHEDNEETEETPVPEPPKIAPMFRKKARVVITQSPGKYVLPPPKLNIEMPD) form a mediates interaction with MAP1B region.

Belongs to the TMEM185 family. As to quaternary structure, interacts with MAP1B.

The protein resides in the cell projection. It is found in the dendrite. Its subcellular location is the membrane. This Homo sapiens (Human) protein is Transmembrane protein 185A (TMEM185A).